The sequence spans 242 residues: Succinyl-CoA:3-ketoacid coenzyme A transferase subunit A (242 aa).

CoA is bound at residue 33 to 39; that stretch reads GGFGLCG.

The protein belongs to the 3-oxoacid CoA-transferase subunit A family. As to quaternary structure, heterodimer of a subunit A and a subunit B.

It carries out the reaction a 3-oxo acid + succinyl-CoA = a 3-oxoacyl-CoA + succinate. Its pathway is bacterial outer membrane biogenesis; lipopolysaccharide biosynthesis. This Xanthomonas campestris pv. campestris (strain ATCC 33913 / DSM 3586 / NCPPB 528 / LMG 568 / P 25) protein is Succinyl-CoA:3-ketoacid coenzyme A transferase subunit A (lpsI).